A 298-amino-acid chain; its full sequence is Inosose dehydratase (298 aa).

The protein belongs to the IolE/MocC family. Requires glutathione as cofactor. The cofactor is Co(2+). Mn(2+) serves as cofactor.

The catalysed reaction is scyllo-inosose = 3D-3,5/4-trihydroxycyclohexane-1,2-dione + H2O. Its pathway is polyol metabolism; myo-inositol degradation into acetyl-CoA; acetyl-CoA from myo-inositol: step 2/7. In terms of biological role, catalyzes the dehydration of inosose (2-keto-myo-inositol, 2KMI or 2,4,6/3,5-pentahydroxycyclohexanone) to 3D-(3,5/4)-trihydroxycyclohexane-1,2-dione (D-2,3-diketo-4-deoxy-epi-inositol). In Bacillus cereus (strain AH820), this protein is Inosose dehydratase.